The sequence spans 528 residues: Abrin-a (528 aa).

Position 1 is a pyrrolidone carboxylic acid (Q1). E164 is a catalytic residue. 3 disulfides stabilise this stretch: C247-C269, C286-C305, and C329-C346. Residues 273-400 (YEPTVRIGGR…YLMRQGWRTG (128 aa)) form the Ricin B-type lectin 1 domain. The 1-alpha repeat unit spans residues 283-325 (DGMCVDVYDNGYHNGNRIIMWKCKDRLEENQLWTLKSDKTIRS). The 1-beta repeat unit spans residues 326–366 (NGKCLTTYGYAPGSYVMIYDCTSAVAEATYWEIWDNGTIIN). 2 N-linked (GlcNAc...) asparagine glycosylation sites follow: N361 and N401. The stretch at 369 to 401 (SALVLSAESSSMGGTLTVQTNEYLMRQGWRTGN) is one 1-gamma repeat. One can recognise a Ricin B-type lectin 2 domain in the interval 403–527 (TSPFVTSISG…GKPNQIWLTL (125 aa)). One copy of the 2-alpha repeat lies at 414-449 (SDLCMQAQGSNVWMADCDSNKKEQQWALYTDGSIRS). 2 disulfide bridges follow: C417–C430 and C456–C473. One copy of the 2-beta repeat lies at 453 to 492 (TNNCLTSKDHKQGSTILLMGCSNGWASQRWVFKNDGSIYS). One copy of the 2-gamma repeat lies at 495 to 528 (DDMVMDVKGSDPSLKQIILWPYTGKPNQIWLTLF).

This sequence in the N-terminal section; belongs to the ribosome-inactivating protein family. Type 2 RIP subfamily. As to quaternary structure, disulfide-linked dimer of A and B chains.

It catalyses the reaction Endohydrolysis of the N-glycosidic bond at one specific adenosine on the 28S rRNA.. Its function is as follows. The A chain is responsible for inhibiting protein synthesis through the catalytic inactivation of 60S ribosomal subunits by removing adenine from position 4,324 of 28S rRNA. Abrin-a is more toxic than ricin. The B chain is a galactose-specific lectin that facilitates the binding of abrin to the cell membrane that precedes endocytosis. This is Abrin-a from Abrus precatorius (Indian licorice).